Reading from the N-terminus, the 240-residue chain is uncharacterized protein (240 aa).

Residues 1–85 (MSGFIKSTLL…LCGCCCWTNT (85 aa)) are Cytoplasmic-facing. The chain crosses the membrane as a helical span at residues 86–106 (IGWAPLLALLPVIGPLLMYWV). Over 107–131 (HDKLIELADDRYKLPAEIKVKMHGN) the chain is Extracellular. The chain crosses the membrane as a helical span at residues 132-152 (IVIDLLISLVPILGSVFAWLH). The Cytoplasmic segment spans residues 153–240 (ACSTRNAAIV…TNGRPQRGYR (88 aa)). The disordered stretch occupies residues 181–240 (QKEENEKHSNANTAPPVVGGNKNVNGNRNNSKMYNRPPVTAPPAPAYTRSTNGRPQRGYR). Low complexity predominate over residues 197 to 210 (VVGGNKNVNGNRNN).

It is found in the membrane. This is an uncharacterized protein from Saccharomyces cerevisiae (strain ATCC 204508 / S288c) (Baker's yeast).